Consider the following 196-residue polypeptide: Protein LSM12 homolog A (196 aa).

One can recognise a Sm domain in the interval 3–73; it reads APGPGEYFSV…VSEVDIINDR (71 aa). The AD domain occupies 81 to 175; sequence ASLNISKLAN…IVEKHFRDVE (95 aa). The segment at 174–196 is disordered; it reads VESQKTMQRSQAQQTQKDSSLSS. The segment covering 177-196 has biased composition (polar residues); the sequence is QKTMQRSQAQQTQKDSSLSS.

Belongs to the LSM12 family.

The protein is Protein LSM12 homolog A (lsm12a) of Danio rerio (Zebrafish).